We begin with the raw amino-acid sequence, 117 residues long: MAGLVKLSCLVLACMIVAGPIATNAALSCGTVSGNLAACIGYLTQNGPLPRGCCTGVTNLNNMARTTPDRQQACRCLVGAANSFPTLNAARAAGLPKACGVNIPYKISKSTNCNSVR.

Residues 1-25 (MAGLVKLSCLVLACMIVAGPIATNA) form the signal peptide. 4 cysteine pairs are disulfide-bonded: cysteine 29-cysteine 76, cysteine 39-cysteine 53, cysteine 54-cysteine 99, and cysteine 74-cysteine 113.

This sequence belongs to the plant LTP family.

Functionally, plant non-specific lipid-transfer proteins transfer phospholipids as well as galactolipids across membranes. May play a role in wax or cutin deposition in the cell walls of expanding epidermal cells and certain secretory tissues. The protein is Non-specific lipid-transfer protein B (WAX9B) of Brassica oleracea var. italica (Broccoli).